The primary structure comprises 276 residues: Homeobox-leucine zipper protein HOX22 (276 aa).

A DNA-binding region (homeobox) is located at residues alanine 70–glutamine 130. The interval lysine 129–arginine 173 is leucine-zipper. Positions leucine 170–glycine 212 are disordered. Residues alanine 182–serine 197 show a composition bias toward low complexity.

The protein belongs to the HD-ZIP homeobox family. Class I subfamily. As to expression, expressed in seedlings, roots, stems, leaf sheaths and blades and panicles.

The protein resides in the nucleus. Functionally, probable transcription factor. The protein is Homeobox-leucine zipper protein HOX22 (HOX22) of Oryza sativa subsp. japonica (Rice).